A 378-amino-acid chain; its full sequence is Probable 3-hydroxyisobutyryl-CoA hydrolase 3 (378 aa).

Residues glutamate 138 and aspartate 146 each contribute to the substrate site.

This sequence belongs to the enoyl-CoA hydratase/isomerase family.

It is found in the peroxisome. It catalyses the reaction 3-hydroxy-2-methylpropanoyl-CoA + H2O = 3-hydroxy-2-methylpropanoate + CoA + H(+). It participates in amino-acid degradation; L-valine degradation. Involved in valine catabolism. The polypeptide is Probable 3-hydroxyisobutyryl-CoA hydrolase 3 (Arabidopsis thaliana (Mouse-ear cress)).